Here is a 150-residue protein sequence, read N- to C-terminus: UPF0756 membrane protein HD_1071 (150 aa).

The next 4 membrane-spanning stretches (helical) occupy residues 1-21 (MSLQ…LGVL), 52-72 (YGLT…IVSG), 82-102 (ILSW…WLGG), and 114-134 (IITG…GIPV).

The protein belongs to the UPF0756 family.

It localises to the cell membrane. This chain is UPF0756 membrane protein HD_1071, found in Haemophilus ducreyi (strain 35000HP / ATCC 700724).